Reading from the N-terminus, the 185-residue chain is Endoribonuclease YbeY (185 aa).

3 residues coordinate Zn(2+): His-135, His-139, and His-145.

Belongs to the endoribonuclease YbeY family. Requires Zn(2+) as cofactor.

It is found in the cytoplasm. Its function is as follows. Single strand-specific metallo-endoribonuclease involved in late-stage 70S ribosome quality control and in maturation of the 3' terminus of the 16S rRNA. The chain is Endoribonuclease YbeY from Parasynechococcus marenigrum (strain WH8102).